A 552-amino-acid chain; its full sequence is Probable malate:quinone oxidoreductase (552 aa).

The disordered stretch occupies residues 530–552 (DAKPATPEAKPAQASSPQHDMAL). Residues 542 to 552 (QASSPQHDMAL) are compositionally biased toward polar residues.

The protein belongs to the MQO family. FAD is required as a cofactor.

The catalysed reaction is (S)-malate + a quinone = a quinol + oxaloacetate. The protein operates within carbohydrate metabolism; tricarboxylic acid cycle; oxaloacetate from (S)-malate (quinone route): step 1/1. This chain is Probable malate:quinone oxidoreductase, found in Cronobacter sakazakii (strain ATCC BAA-894) (Enterobacter sakazakii).